The chain runs to 360 residues: Nucleoporin SEH1 (360 aa).

6 WD repeats span residues 10-49, 55-96, 111-152, 160-210, 217-258, and 276-315; these read DHKD…DWHC, THSG…SNDK, DSRT…NLSQ, SCKL…RKYA, TVTD…KELT, and NHNS…NWKC. A Glycyl lysine isopeptide (Lys-Gly) (interchain with G-Cter in SUMO2) cross-link involves residue lysine 12. Phosphoserine is present on residues serine 179 and serine 190. The segment covering 324 to 354 has biased composition (polar residues); the sequence is SPVNGSSQQGTSNPSLGSTIPSLQNSLNGSS. The tract at residues 324–360 is disordered; sequence SPVNGSSQQGTSNPSLGSTIPSLQNSLNGSSAGRKHS.

It belongs to the WD repeat SEC13 family. In terms of assembly, component of the Nup107-160 subcomplex of the nuclear pore complex (NPC). The Nup107-160 subcomplex includes NUP160, NUP133, NUP107, NUP98, NUP85, NUP43, NUP37, SEH1 and SEC13. The SEH1 subunit appears to be only weakly associated with the Nup107-160 subcomplex. Component of the GATOR2 subcomplex, composed of MIOS, SEC13, SEH1L, WDR24 and WDR59. The GATOR2 complex interacts with CASTOR1 and CASTOR2; the interaction is negatively regulated by arginine. The GATOR2 complex interacts with SESN1, SESN2 and SESN3; the interaction is negatively regulated by amino acids. SESN1, SESN2 and SESN3 convey leucine availability via direct interaction with SEH1L and WDR24.

The protein resides in the chromosome. It localises to the centromere. The protein localises to the kinetochore. Its subcellular location is the nucleus. It is found in the nuclear pore complex. The protein resides in the lysosome membrane. With respect to regulation, the GATOR2 complex is negatively regulated by the upstream amino acid sensors CASTOR1 and SESN2, which sequester the GATOR2 complex in absence of amino acids. In the presence of abundant amino acids, GATOR2 is released from CASTOR1 and SESN2 and activated. In terms of biological role, component of the Nup107-160 subcomplex of the nuclear pore complex (NPC). The Nup107-160 subcomplex is required for the assembly of a functional NPC. The Nup107-160 subcomplex is also required for normal kinetochore microtubule attachment, mitotic progression and chromosome segregation. This subunit plays a role in recruitment of the Nup107-160 subcomplex to the kinetochore. Functionally, as a component of the GATOR2 complex, functions as an activator of the amino acid-sensing branch of the mTORC1 signaling pathway. The GATOR2 complex indirectly activates mTORC1 through the inhibition of the GATOR1 subcomplex. GATOR2 probably acts as an E3 ubiquitin-protein ligase toward GATOR1. In the presence of abundant amino acids, the GATOR2 complex mediates ubiquitination of the NPRL2 core component of the GATOR1 complex, leading to GATOR1 inactivation. In the absence of amino acids, GATOR2 is inhibited, activating the GATOR1 complex. Within the GATOR2 complex, SEC13 and SEH1L are required to stabilize the complex. This chain is Nucleoporin SEH1 (SEH1L), found in Homo sapiens (Human).